The primary structure comprises 193 residues: Orotate phosphoribosyltransferase (193 aa).

Residues Arg-85, Lys-89, and 111–119 each bind 5-phospho-alpha-D-ribose 1-diphosphate; that span reads DDVLTTGKS. The orotate site is built by Thr-115 and Arg-143.

This sequence belongs to the purine/pyrimidine phosphoribosyltransferase family. PyrE subfamily. In terms of assembly, homodimer. Mg(2+) serves as cofactor.

It catalyses the reaction orotidine 5'-phosphate + diphosphate = orotate + 5-phospho-alpha-D-ribose 1-diphosphate. Its pathway is pyrimidine metabolism; UMP biosynthesis via de novo pathway; UMP from orotate: step 1/2. Its function is as follows. Catalyzes the transfer of a ribosyl phosphate group from 5-phosphoribose 1-diphosphate to orotate, leading to the formation of orotidine monophosphate (OMP). The chain is Orotate phosphoribosyltransferase from Pyrobaculum aerophilum (strain ATCC 51768 / DSM 7523 / JCM 9630 / CIP 104966 / NBRC 100827 / IM2).